The sequence spans 183 residues: MSRKAREPILLPQGVEVSIQDDKIIVKGPKGSLTQKSVKEVEITLKDNSIFVHAAPHVVDRPSCMQGLYWALISNMVQGVHLGFEKRLEMIGVGFRASVQGAFLDLSIGVSHPTKIPIPSTLQVSVEKNTLISVKGLDKQLVGEFAASIRAKRPPEPYKGKGIRYENEYVRRKAGKAAKTGKK.

It belongs to the universal ribosomal protein uL6 family. Part of the 50S ribosomal subunit.

Functionally, this protein binds to the 23S rRNA, and is important in its secondary structure. It is located near the subunit interface in the base of the L7/L12 stalk, and near the tRNA binding site of the peptidyltransferase center. This is Large ribosomal subunit protein uL6 from Chlamydia pneumoniae (Chlamydophila pneumoniae).